A 160-amino-acid chain; its full sequence is Dihydrofolate reductase (160 aa).

The region spanning 1 to 160 (MVKAIWAMDQ…KVAYYHKIAR (160 aa)) is the DHFR domain. Substrate is bound at residue 5-7 (IWA). Residues 6–7 (WA) and 14–19 (IGNGNS) each bind NADP(+). Glu27 and Arg32 together coordinate substrate. An NADP(+)-binding site is contributed by 43 to 46 (GSAT). Arg57 contacts substrate. NADP(+) contacts are provided by residues 62–65 (LTRN) and 101–106 (CGGAQV). Ser120 serves as a coordination point for substrate.

This sequence belongs to the dihydrofolate reductase family.

It catalyses the reaction (6S)-5,6,7,8-tetrahydrofolate + NADP(+) = 7,8-dihydrofolate + NADPH + H(+). The protein operates within cofactor biosynthesis; tetrahydrofolate biosynthesis; 5,6,7,8-tetrahydrofolate from 7,8-dihydrofolate: step 1/1. Functionally, key enzyme in folate metabolism. Catalyzes an essential reaction for de novo glycine and purine synthesis, and for DNA precursor synthesis. The sequence is that of Dihydrofolate reductase (folA) from Mycoplasma pneumoniae (strain ATCC 29342 / M129 / Subtype 1) (Mycoplasmoides pneumoniae).